The following is a 100-amino-acid chain: Cysteine-rich venom protein VAR1 (100 aa).

The first 22 residues, 1–22, serve as a signal peptide directing secretion; it reads MILLKLYLTLAAILCQSRGTTS. An SCP domain is found at 41–81; it reads NKHNDLRRTVDPPAKNMLKMSWDNIIAESAKRAALRCNQNE.

It belongs to the CRISP family. Post-translationally, contains 8 disulfide bonds. In terms of tissue distribution, expressed by the venom gland.

The protein resides in the secreted. Functionally, blocks ryanodine receptors, and potassium channels. This Varanus acanthurus (Ridge-tailed monitor) protein is Cysteine-rich venom protein VAR1.